The primary structure comprises 623 residues: Low affinity potassium transport system protein Kup (623 aa).

Helical transmembrane passes span 10 to 30 (LSAV…TSPL), 47 to 67 (PDVV…IVSV), 102 to 122 (ILVI…VITP), 138 to 158 (PALD…LFVI), 166 to 186 (VGKL…LLGL), 214 to 234 (VSFF…ALYA), 248 to 268 (WFTV…ALLL), 277 to 297 (PFFL…ATLA), 338 to 358 (IYIP…IVGF), 364 to 384 (LAAA…VLFC), 396 to 416 (FFVY…FSAN), and 420 to 440 (LFSG…IMTT).

The protein belongs to the HAK/KUP transporter (TC 2.A.72) family.

The protein resides in the cell inner membrane. The enzyme catalyses K(+)(in) + H(+)(in) = K(+)(out) + H(+)(out). In terms of biological role, responsible for the low-affinity transport of potassium into the cell. Likely operates as a K(+):H(+) symporter. The chain is Low affinity potassium transport system protein Kup from Yersinia enterocolitica serotype O:8 / biotype 1B (strain NCTC 13174 / 8081).